The primary structure comprises 162 residues: Phenazine biosynthesis protein PhzB 2 (162 aa).

Phosphothreonine is present on threonine 91.

The protein belongs to the PhzA/PhzB family.

In terms of biological role, involved in the biosynthesis of the antibiotic phenazine, a nitrogen-containing heterocyclic molecule having important roles in virulence, competition and biological control. This Pseudomonas aeruginosa (strain UCBPP-PA14) protein is Phenazine biosynthesis protein PhzB 2 (phzB2).